The sequence spans 184 residues: Leucine-rich repeat-containing protein 20 (184 aa).

LRR repeat units follow at residues Gln-51–Thr-72, Gln-75–Leu-96, His-98–Pro-120, Ala-121–Ala-141, and Ala-145–Leu-167. Ser-175 carries the post-translational modification Phosphoserine.

This chain is Leucine-rich repeat-containing protein 20 (LRRC20), found in Homo sapiens (Human).